Consider the following 169-residue polypeptide: Large ribosomal subunit protein uL10 (169 aa).

Belongs to the universal ribosomal protein uL10 family. Part of the ribosomal stalk of the 50S ribosomal subunit. The N-terminus interacts with L11 and the large rRNA to form the base of the stalk. The C-terminus forms an elongated spine to which L12 dimers bind in a sequential fashion forming a multimeric L10(L12)X complex.

Forms part of the ribosomal stalk, playing a central role in the interaction of the ribosome with GTP-bound translation factors. This is Large ribosomal subunit protein uL10 from Rickettsia peacockii (strain Rustic).